The following is a 615-amino-acid chain: DNA mismatch repair protein MutL (615 aa).

The segment at histidine 362–tyrosine 397 is disordered. Positions alanine 373–proline 391 are enriched in low complexity.

Belongs to the DNA mismatch repair MutL/HexB family.

Functionally, this protein is involved in the repair of mismatches in DNA. It is required for dam-dependent methyl-directed DNA mismatch repair. May act as a 'molecular matchmaker', a protein that promotes the formation of a stable complex between two or more DNA-binding proteins in an ATP-dependent manner without itself being part of a final effector complex. In Escherichia coli O45:K1 (strain S88 / ExPEC), this protein is DNA mismatch repair protein MutL.